The primary structure comprises 368 residues: Peptide chain release factor 2 (368 aa).

Q250 carries the post-translational modification N5-methylglutamine.

This sequence belongs to the prokaryotic/mitochondrial release factor family. Post-translationally, methylated by PrmC. Methylation increases the termination efficiency of RF2.

It localises to the cytoplasm. In terms of biological role, peptide chain release factor 2 directs the termination of translation in response to the peptide chain termination codons UGA and UAA. The polypeptide is Peptide chain release factor 2 (Mycolicibacterium vanbaalenii (strain DSM 7251 / JCM 13017 / BCRC 16820 / KCTC 9966 / NRRL B-24157 / PYR-1) (Mycobacterium vanbaalenii)).